The chain runs to 1368 residues: DNA-directed RNA polymerase subunit beta (1368 aa).

The protein belongs to the RNA polymerase beta chain family. In terms of assembly, the RNAP catalytic core consists of 2 alpha, 1 beta, 1 beta' and 1 omega subunit. When a sigma factor is associated with the core the holoenzyme is formed, which can initiate transcription.

It catalyses the reaction RNA(n) + a ribonucleoside 5'-triphosphate = RNA(n+1) + diphosphate. In terms of biological role, DNA-dependent RNA polymerase catalyzes the transcription of DNA into RNA using the four ribonucleoside triphosphates as substrates. This chain is DNA-directed RNA polymerase subunit beta, found in Paraburkholderia phymatum (strain DSM 17167 / CIP 108236 / LMG 21445 / STM815) (Burkholderia phymatum).